We begin with the raw amino-acid sequence, 327 residues long: Undecaprenyl-phosphate 4-deoxy-4-formamido-L-arabinose transferase (327 aa).

Residues 1-235 (MFDAAPIKKV…TCLTTTPLRL (235 aa)) lie on the Cytoplasmic side of the membrane. Residues 236-256 (LSLLGSVIAIGGFSLSVLLIV) form a helical membrane-spanning segment. The Periplasmic segment spans residues 257-269 (LRLALGPQWAAEG). The chain crosses the membrane as a helical span at residues 270–290 (VFMLFAVLFTFIGAQFIGMGL). The Cytoplasmic portion of the chain corresponds to 291-327 (LGEYIGRIYNDVRARPRYFVQQVIYPESTSFTEESHQ).

It belongs to the glycosyltransferase 2 family.

It localises to the cell inner membrane. The enzyme catalyses UDP-4-deoxy-4-formamido-beta-L-arabinose + di-trans,octa-cis-undecaprenyl phosphate = 4-deoxy-4-formamido-alpha-L-arabinopyranosyl di-trans,octa-cis-undecaprenyl phosphate + UDP. Its pathway is glycolipid biosynthesis; 4-amino-4-deoxy-alpha-L-arabinose undecaprenyl phosphate biosynthesis; 4-amino-4-deoxy-alpha-L-arabinose undecaprenyl phosphate from UDP-4-deoxy-4-formamido-beta-L-arabinose and undecaprenyl phosphate: step 1/2. The protein operates within bacterial outer membrane biogenesis; lipopolysaccharide biosynthesis. Catalyzes the transfer of 4-deoxy-4-formamido-L-arabinose from UDP to undecaprenyl phosphate. The modified arabinose is attached to lipid A and is required for resistance to polymyxin and cationic antimicrobial peptides. The polypeptide is Undecaprenyl-phosphate 4-deoxy-4-formamido-L-arabinose transferase (Salmonella newport (strain SL254)).